Here is a 354-residue protein sequence, read N- to C-terminus: Guanine nucleotide-binding protein G(i) subunit alpha-1 (354 aa).

The N-myristoyl glycine moiety is linked to residue G2. C3 is lipidated: S-palmitoyl cysteine. Residues 32 to 354 enclose the G-alpha domain; the sequence is REVKLLLLGA…KNNLKDCGLF (323 aa). Residues 35–48 form a G1 motif region; sequence KLLLLGAGESGKST. GTP is bound by residues 43-48, 150-151, and 175-178; these read ESGKST, DS, and LRTR. S47 lines the Mg(2+) pocket. The segment at 173–181 is G2 motif; it reads DVLRTRVKT. Residue T181 coordinates Mg(2+). Residues 196–205 form a G3 motif region; the sequence is FKMFDVGGQR. Residues 200–204, 269–272, and A326 contribute to the GTP site; these read DVGGQ and NKKD. A G4 motif region spans residues 265 to 272; sequence ILFLNKKD. A G5 motif region spans residues 324–329; sequence TCATDT.

The protein belongs to the G-alpha family. G(i/o/t/z) subfamily. In terms of assembly, heterotrimeric G proteins are composed of 3 units; alpha, beta and gamma. The alpha chain contains the guanine nucleotide binding site. Part of a spindle orientation complex. Identified in complex with the beta subunit GNB1 and the gamma subunit GNG1. Identified in complex with the beta subunit GNB1 and the gamma subunit GNG2. GTP binding causes dissociation of the heterotrimer, liberating the individual subunits so that they can interact with downstream effector proteins. Myristoylation at Gly-2 is required for membrane anchoring before palmitoylation. In terms of processing, palmitoylation at Cys-3 varies with membrane lipid composition.

It localises to the nucleus. Its subcellular location is the cytoplasm. The protein resides in the cell membrane. The protein localises to the cytoskeleton. It is found in the microtubule organizing center. It localises to the centrosome. Its subcellular location is the cell cortex. The protein resides in the membrane. It catalyses the reaction GTP + H2O = GDP + phosphate + H(+). Functionally, guanine nucleotide-binding proteins (G proteins) function as transducers downstream of G protein-coupled receptors (GPCRs) in numerous signaling cascades. The alpha chain contains the guanine nucleotide binding site and alternates between an active, GTP-bound state and an inactive, GDP-bound state. Signaling by an activated GPCR promotes GDP release and GTP binding. The alpha subunit has a low GTPase activity that converts bound GTP to GDP, thereby terminating the signal. Both GDP release and GTP hydrolysis are modulated by numerous regulatory proteins. Signaling is mediated via effector proteins, such as adenylate cyclase. Inhibits adenylate cyclase activity, leading to decreased intracellular cAMP levels. Required for cortical dynein-dynactin complex recruitment during metaphase. This is Guanine nucleotide-binding protein G(i) subunit alpha-1 (gnai1) from Xenopus laevis (African clawed frog).